The primary structure comprises 842 residues: MAQNLDAQYNAAVERFRSEEFPMIRVDSIYLDHAGTTLCPKSLLEAFARDMAGNLYGNPHSASNSSQLSTSRIEDIRLQALQLFGASPDEFDLVFVANATAGIKLVSESLRARDGGFGFLYHQASHTSLVGVREEAQSSICLSEDETEELLAGSTTSLDLVTRSPPGAVLLAYTAQSNFDGRRYPLTWADKVRRAHASGCTPICTLLDAASFVSTSPLHLGESKAAPDFTVLSFYKIFGFPDLGALIVRKQAWHLFESRKYFGGGTVDMVVNFKESWHAPKNGFLHERLEDGTLPIHNILALGSAIKIHQGLFGPMRTVSSHATFLAQEMITNLQNLHHSNGEKVCTLYSPYPKPNVDGNGWNQGPIIAFNICTSNGSWVSLGEFEKLASLRDINIRTGSLCNPGGIAIALALEPWEMKRNFSAGLRCGADNDMALGKPTGVIRASLGAMSTTSDVDRFVAFIVEFFCDDGAASRDLQTPRVQPSLASGEAELCVDSLTIYPIKSCAGYSIPHGKQWQVRPEGLAWDREWCLLHRGSGQALSQKRYPKMALIKPVVDLESGRLAVGYLGEPIPYLPERVSVPLSHDPSVFRPSTYVSAAPSRVCGDQVATKIYHDDELNEFFSKAIGVPCVLARFPPGSQHGDAQRSSKARLQKHQITTDQESDVQEVHPGSGTTTDSTWGNDKSQNILLSNESPILLINLASVDALNQEIKSRKGSSAVRIPTSAFRANVVLRRTDESRPDGAQGLPYAEERWRGLTIGNQTYTMLGACRRCQMVCVDQVTGCRGDEPFSTLSKTRRFDGKVFFGVHMAWGPGSPSNNVVAARGDVAYPTIEVGERVLVHV.

Position 236 is an N6-(pyridoxal phosphate)lysine (Lys-236). Cys-402 is an active-site residue. The tract at residues 637–680 (PGSQHGDAQRSSKARLQKHQITTDQESDVQEVHPGSGTTTDSTW) is disordered. The MOSC domain occupies 663-831 (SDVQEVHPGS…AARGDVAYPT (169 aa)).

The protein belongs to the class-V pyridoxal-phosphate-dependent aminotransferase family. MOCOS subfamily. The cofactor is pyridoxal 5'-phosphate.

The enzyme catalyses Mo-molybdopterin + L-cysteine + AH2 = thio-Mo-molybdopterin + L-alanine + A + H2O. The protein operates within cofactor biosynthesis; molybdopterin biosynthesis. Functionally, sulfurates the molybdenum cofactor. Sulfation of molybdenum is essential for xanthine dehydrogenase (XDH) and aldehyde oxidase (ADO) enzymes in which molybdenum cofactor is liganded by 1 oxygen and 1 sulfur atom in active form. The polypeptide is Molybdenum cofactor sulfurase (Pyricularia oryzae (strain 70-15 / ATCC MYA-4617 / FGSC 8958) (Rice blast fungus)).